Here is a 352-residue protein sequence, read N- to C-terminus: Peptide chain release factor 1 (352 aa).

Position 233 is an N5-methylglutamine (Gln233). Residues 288 to 309 (NAKDRKEQVGSGDRSERIRTYN) are disordered. A compositionally biased stretch (basic and acidic residues) spans 289 to 306 (AKDRKEQVGSGDRSERIR).

It belongs to the prokaryotic/mitochondrial release factor family. In terms of processing, methylated by PrmC. Methylation increases the termination efficiency of RF1.

The protein resides in the cytoplasm. Its function is as follows. Peptide chain release factor 1 directs the termination of translation in response to the peptide chain termination codons UAG and UAA. The sequence is that of Peptide chain release factor 1 (prfA) from Helicobacter pylori (strain J99 / ATCC 700824) (Campylobacter pylori J99).